A 309-amino-acid polypeptide reads, in one-letter code: Methionyl-tRNA formyltransferase (309 aa).

109–112 provides a ligand contact to (6S)-5,6,7,8-tetrahydrofolate; the sequence is SLLP.

Belongs to the Fmt family.

It catalyses the reaction L-methionyl-tRNA(fMet) + (6R)-10-formyltetrahydrofolate = N-formyl-L-methionyl-tRNA(fMet) + (6S)-5,6,7,8-tetrahydrofolate + H(+). Functionally, attaches a formyl group to the free amino group of methionyl-tRNA(fMet). The formyl group appears to play a dual role in the initiator identity of N-formylmethionyl-tRNA by promoting its recognition by IF2 and preventing the misappropriation of this tRNA by the elongation apparatus. The polypeptide is Methionyl-tRNA formyltransferase (Clostridium perfringens (strain 13 / Type A)).